A 414-amino-acid polypeptide reads, in one-letter code: xyloglucan O-acetyltransferase 2 (414 aa).

The Cytoplasmic portion of the chain corresponds to 1–26; the sequence is MKSSSSIFRETSEKKSERWMMMNIGR. The helical; Signal-anchor for type II membrane protein transmembrane segment at 27–47 threads the bilayer; it reads FSPFFLSSFCITLFFTGFFVY. The Lumenal segment spans residues 48 to 414; that stretch reads QNPFKSIADQ…FLMAIIRQLR (367 aa). Disulfide bonds link C70–C120, C91–C156, C100–C394, and C317–C390. A glycan (N-linked (GlcNAc...) asparagine) is linked at N88. A GDS motif motif is present at residues 143-145; the sequence is GDS. S145 functions as the Nucleophile in the catalytic mechanism. Residues N205, N263, and N308 are each glycosylated (N-linked (GlcNAc...) asparagine). D389 serves as the catalytic Proton donor. The short motif at 389–392 is the DXXH motif element; the sequence is DCVH. Catalysis depends on H392, which acts as the Proton acceptor.

Belongs to the PC-esterase family. TBL subfamily.

Its subcellular location is the membrane. Xyloglucan acetyltransferase that catalyzes the acetylation of fucosylated Gal residues on xyloglucan side chains. Predominantly catalyze 6-O-monoacetylation of Gal residues in the Fuc-Gal-Xyl trisaccharide side chains of xyloglucan oligomers. Involved in xyloglucan specific O-acetylation in seeds. The polypeptide is xyloglucan O-acetyltransferase 2 (Arabidopsis thaliana (Mouse-ear cress)).